An 85-amino-acid polypeptide reads, in one-letter code: Kappa-theraphotoxin-Cg1d (85 aa).

The N-terminal stretch at 1-21 (MKVSVLITLAVLGVMFVWASA) is a signal peptide. The propeptide occupies 22–51 (AELEERGSDQRDSPAWLKSMERIFQSEERE). 3 disulfide bridges follow: Cys-52-Cys-66, Cys-59-Cys-71, and Cys-65-Cys-78.

Belongs to the neurotoxin 10 (Hwtx-1) family. 28 (Jztx-11) subfamily. Expressed by the venom gland.

It localises to the secreted. Its function is as follows. Probable ion channel inhibitor. The chain is Kappa-theraphotoxin-Cg1d from Chilobrachys guangxiensis (Chinese earth tiger tarantula).